The chain runs to 526 residues: MSLVEAISLWNEGVLAADKKDWKGALDAFSAVQDPHSRICFNIGCMYTILKNMTEAEKAFTRSINRDKHLAVAYFQRGMLYYQTEKYDLAIKDLKEALIQLRGNQLIDYKILGLQFKLFACEVLYNIAFMYAKKEEWKKAEEQLALATSMKSEPRHSKIDKAMECVWKQKLYEPVVIPVGKLFRPNERQVAQLAKKDYLGKATVVASVVDQDSFSGFAPLQPQAAEPPPRPKTPEIFRALEGEAHRVLFGFVPETKEELQVMPGNIVFVLKKGNDNWATVMFNGQKGLVPCNYLEPVELRIHPQQQPQEESSPQSDIPAPPSSKAPGRPQLSPGQKQKEEPKEVKLSVPMPYTLKVHYKYTVVMKTQPGLPYSQVRDMVSKKLELRLEHTKLSYRPRDSNELVPLSEDSMKDAWGQVKNYCLTLWCENTVGDQGFPDEPKESEKADANNQTTEPQLKKGSQVEALFSYEATQPEDLEFQEGDIILVLSKVNEEWLEGECKGKVGIFPKVFVEDCATTDLESTRREV.

3 TPR repeats span residues 37–70, 71–104, and 121–154; these read SRICFNIGCMYTILKNMTEAEKAFTRSINRDKHL, AVAYFQRGMLYYQTEKYDLAIKDLKEALIQLRGN, and CEVLYNIAFMYAKKEEWKKAEEQLALATSMKSEP. T233 carries the post-translational modification Phosphothreonine. One can recognise an SH3 1 domain in the interval 240–299; sequence LEGEAHRVLFGFVPETKEELQVMPGNIVFVLKKGNDNWATVMFNGQKGLVPCNYLEPVEL. Positions 303 to 315 are enriched in low complexity; sequence PQQQPQEESSPQS. The segment at 303–346 is disordered; that stretch reads PQQQPQEESSPQSDIPAPPSSKAPGRPQLSPGQKQKEEPKEVKL. Residues 336 to 345 show a composition bias toward basic and acidic residues; sequence KQKEEPKEVK. Positions 351 to 429 constitute a PB1 domain; sequence PYTLKVHYKY…YCLTLWCENT (79 aa). The residue at position 399 (S399) is a Phosphoserine. Residues 433–458 form a disordered region; it reads QGFPDEPKESEKADANNQTTEPQLKK. The span at 437-446 shows a compositional bias: basic and acidic residues; that stretch reads DEPKESEKAD. Residues 457–516 form the SH3 2 domain; sequence KKGSQVEALFSYEATQPEDLEFQEGDIILVLSKVNEEWLEGECKGKVGIFPKVFVEDCAT.

The protein belongs to the NCF2/NOXA1 family. Component of the phagocyte NADPH oxidase complex composed of an obligatory core heterodimer formed by the membrane proteins CYBA and CYBB and the cytosolic regulatory subunits NCF1/p47-phox, NCF2/p67-phox, NCF4/p40-phox and the small GTPase RAC1 or RAC2. Part of a cytosolic complex composed at least by NCF1, NCF2 and NCF4. Interacts with NCF4. Interacts (via the C-terminal SH3 domain) with NCF1 (via C-terminus). Interacts with SYTL1 and RAC1. May interact with NOXO1. Interacts with S100A8 and calprotectin (S100A8/9). Interacts with GBP7 (via GB1/RHD3-type G domain). Interacts with CYBB; the interaction is enhanced in the presence of GBP7.

Its subcellular location is the cytoplasm. Subunit of the phagocyte NADPH oxidase complex that mediates the transfer of electrons from cytosolic NADPH to O2 to produce the superoxide anion (O2(-)). In the activated complex, electrons are first transferred from NADPH to flavin adenine dinucleotide (FAD) and subsequently transferred via two heme molecules to molecular oxygen, producing superoxide through an outer-sphere reaction. Activation of the NADPH oxidase complex is initiated by the assembly of cytosolic subunits of the NADPH oxidase complex with the core NADPH oxidase complex to form a complex at the plasma membrane or phagosomal membrane. This activation process is initiated by phosphorylation dependent binding of the cytosolic NCF1/p47-phox subunit to the C-terminus of CYBA/p22-phox. This is Neutrophil cytosol factor 2 from Homo sapiens (Human).